The following is a 157-amino-acid chain: Serine-protein kinase RsbW (157 aa).

This sequence belongs to the anti-sigma-factor family.

The catalysed reaction is L-seryl-[protein] + ATP = O-phospho-L-seryl-[protein] + ADP + H(+). It carries out the reaction L-threonyl-[protein] + ATP = O-phospho-L-threonyl-[protein] + ADP + H(+). In terms of biological role, negative regulator of sigma-B activity. Phosphorylates and inactivates its specific antagonist protein, RsbV. Upon phosphorylation of RsbV, RsbW is released and binds to sigma-B, thereby blocking its ability to form an RNA polymerase holoenzyme (E-sigma-B). This is Serine-protein kinase RsbW from Listeria innocua serovar 6a (strain ATCC BAA-680 / CLIP 11262).